We begin with the raw amino-acid sequence, 132 residues long: Small ribosomal subunit protein uS8 (132 aa).

The protein belongs to the universal ribosomal protein uS8 family. In terms of assembly, part of the 30S ribosomal subunit. Contacts proteins S5 and S12.

Its function is as follows. One of the primary rRNA binding proteins, it binds directly to 16S rRNA central domain where it helps coordinate assembly of the platform of the 30S subunit. This is Small ribosomal subunit protein uS8 from Ehrlichia canis (strain Jake).